The following is a 96-amino-acid chain: Large ribosomal subunit protein bL21 (96 aa).

Positions 73–84 (KRRKRYQSRNGH) are enriched in basic residues. The interval 73–96 (KRRKRYQSRNGHRQQMTQIEVVSL) is disordered. Over residues 85-96 (RQQMTQIEVVSL) the composition is skewed to polar residues.

This sequence belongs to the bacterial ribosomal protein bL21 family. Part of the 50S ribosomal subunit. Contacts protein L20.

This protein binds to 23S rRNA in the presence of protein L20. This Chlorobium luteolum (strain DSM 273 / BCRC 81028 / 2530) (Pelodictyon luteolum) protein is Large ribosomal subunit protein bL21.